Reading from the N-terminus, the 465-residue chain is MTTQLQPVVTVTPPLPTRRNAELLLLGFAAVITVAALAIVEANQERNFRWYLAGYGLIFWSLFASAHLAIRRFAPYTDPLLLPIVALLNGLGLVMIHRLDLVDNDVTGHHHTSAAQQMLWTLVGVAAFVLVMTVLKDHRQLARYGYISGLTGLVFLAIPAPLPEQNGAKIWIRFPGFSIQPAEFSKILLLIFFAAVLVAKRSLFTSAGKHLIGMTLPRPRDLAPLLAAWVISVSVMVFEKDLGTSLLLYASFLVVVYLATQRLSWVIIGLVLFTAGSTIAYFTFEHIRVRMQVWWDPFTNLDVGGYQIVQSLFSFATGGIFGTGLGNGQPDAIPAASTDFIIAVFGEELGLVGLAALLMLYTIVIVRGLRTAIATRDSFGKLLAAGLASTLAIQLFIVSGGVTTLIPLTGLTTPWMSYGGSSLLANYVLLAILARISHSARHPLRSRPHNTSPIAVASTEVIERV.

Helical transmembrane passes span 21-41 (AELL…AIVE), 50-70 (WYLA…HLAI), 76-96 (YTDP…LVMI), 115-135 (AQQM…MTVL), 144-164 (YGYI…PLPE), 179-199 (IQPA…VLVA), 222-242 (LAPL…EKDL), 243-263 (GTSL…TQRL), 264-284 (SWVI…YFTF), 308-328 (IVQS…LGNG), 340-360 (FIIA…LLML), 382-402 (LLAA…SGGV), and 414-434 (PWMS…AILA).

This sequence belongs to the SEDS family.

It localises to the cell inner membrane. It carries out the reaction [GlcNAc-(1-&gt;4)-Mur2Ac(oyl-L-Ala-gamma-D-Glu-L-Lys-D-Ala-D-Ala)](n)-di-trans,octa-cis-undecaprenyl diphosphate + beta-D-GlcNAc-(1-&gt;4)-Mur2Ac(oyl-L-Ala-gamma-D-Glu-L-Lys-D-Ala-D-Ala)-di-trans,octa-cis-undecaprenyl diphosphate = [GlcNAc-(1-&gt;4)-Mur2Ac(oyl-L-Ala-gamma-D-Glu-L-Lys-D-Ala-D-Ala)](n+1)-di-trans,octa-cis-undecaprenyl diphosphate + di-trans,octa-cis-undecaprenyl diphosphate + H(+). The protein operates within cell wall biogenesis; peptidoglycan biosynthesis. In terms of biological role, transglycosylase involved in peptidoglycan cell wall formation. Required for the regulation of cell length. The protein is Peptidoglycan glycosyltransferase RodA (rodA) of Mycobacterium leprae (strain TN).